The primary structure comprises 202 residues: Secreted RxLR effector protein 93 (202 aa).

The signal sequence occupies residues 1 to 16 (MRFYLTKLFAAAGALA). The segment at 29–58 (TPVSPLSRSSDHHQSDDSTQRRLRTLNGAD) is disordered. Basic and acidic residues predominate over residues 37–48 (SSDHHQSDDSTQ). A RxLR-dEER motif is present at residues 49–61 (RRLRTLNGADEER).

The protein belongs to the RxLR effector family.

It localises to the secreted. The protein resides in the host nucleus. In terms of biological role, secreted effector that completely suppresses the host cell death induced by cell death-inducing proteins. The polypeptide is Secreted RxLR effector protein 93 (Plasmopara viticola (Downy mildew of grapevine)).